A 509-amino-acid polypeptide reads, in one-letter code: Scavenger receptor class B member 1 (509 aa).

The Cytoplasmic portion of the chain corresponds to 1-11 (MGSRSRARQVA). The chain crosses the membrane as a helical span at residues 12–32 (AALGFVGLLLAALGAVMIVMV). Residues 33-439 (PSIIKQQVLK…FYTQLVLMPK (407 aa)) lie on the Extracellular side of the membrane. N-linked (GlcNAc...) asparagine glycans are attached at residues N102, N108, N173, N212, N255, N310, N330, and N383. C251 and C384 are oxidised to a cystine. Residues 440–460 (VLHYAQYVLLALGCVLLFIPI) form a helical membrane-spanning segment. Residues 461 to 509 (VYQIRSQEKCYLFWSSSKKGSKDKEAIQAYSESLMTPAPKGTVLQEARL) lie on the Cytoplasmic side of the membrane.

Belongs to the CD36 family. In terms of assembly, the C-terminal region binds to PDZK1. In terms of processing, N-glycosylated. The six cysteines of the extracellular domain are all involved in intramolecular disulfide bonds.

It localises to the cell membrane. The protein localises to the membrane. The protein resides in the caveola. Receptor for different ligands such as phospholipids, cholesterol ester, lipoproteins, phosphatidylserine and apoptotic cells. Receptor for HDL, mediating selective uptake of cholesteryl ether and HDL-dependent cholesterol efflux. Also facilitates the flux of free and esterified cholesterol between the cell surface and apoB-containing lipoproteins and modified lipoproteins, although less efficiently than HDL. May be involved in the phagocytosis of apoptotic cells, via its phosphatidylserine binding activity. The sequence is that of Scavenger receptor class B member 1 (SCARB1) from Sus scrofa (Pig).